The primary structure comprises 134 residues: Large ribosomal subunit protein bL20 (134 aa).

Belongs to the bacterial ribosomal protein bL20 family.

In terms of biological role, binds directly to 23S ribosomal RNA and is necessary for the in vitro assembly process of the 50S ribosomal subunit. It is not involved in the protein synthesizing functions of that subunit. This Sinorhizobium fredii (strain NBRC 101917 / NGR234) protein is Large ribosomal subunit protein bL20.